A 1040-amino-acid chain; its full sequence is Multidrug resistance protein MdtB (1040 aa).

Helical transmembrane passes span 16–36, 347–367, 369–389, 396–416, 440–460, 472–492, 537–557, 863–883, 888–908, 911–931, 968–988, and 998–1018; these read FIMRPVATTLLMVAILLAGII, LMMAIALVVMIIYLFLRNIPA, IIPGVAVPLSLIGTFAVMVFL, LTLMALTIATGFVVDDAIVVI, IGFTIISLTFSLIAVLIPLLF, FAITLAVAILISAVVSLTLTP, WLTLSVALSTLLLSVLLWVFI, LGSTVWLIVAAVVAMYIVLGI, FIHPITILSTLPTAGVGALLA, IAGSELDVIAIIGIILLIGIV, ILMTTLAALLGALPLMLSTGV, and IGMVGGLIVSQVLTLFTTPVI.

It belongs to the resistance-nodulation-cell division (RND) (TC 2.A.6) family. MdtB subfamily. In terms of assembly, part of a tripartite efflux system composed of MdtA, MdtB and MdtC. MdtB forms a heteromultimer with MdtC.

Its subcellular location is the cell inner membrane. Functionally, the MdtABC tripartite complex confers resistance against novobiocin and deoxycholate. This is Multidrug resistance protein MdtB from Escherichia coli O7:K1 (strain IAI39 / ExPEC).